The sequence spans 354 residues: Stearoyl-CoA desaturase (354 aa).

Positions Met-1–Ser-28 are disordered. The Cytoplasmic segment spans residues Met-1–Val-67. A compositionally biased stretch (low complexity) spans Glu-8–Ser-28. A helical transmembrane segment spans residues Trp-68 to Val-88. Residue Asn-70 participates in substrate binding. The Lumenal segment spans residues Pro-89–Lys-92. The helical transmembrane segment at Val-93–Gly-113 threads the bilayer. Topologically, residues Val-114–Tyr-212 are cytoplasmic. The Fe cation site is built by His-115 and His-120. The short motif at His-115 to His-120 is the Histidine box-1 element. The substrate site is built by Asn-143, Arg-150, and Asp-151. The Fe cation site is built by His-152, His-155, and His-156. Positions His-152–His-156 match the Histidine box-2 motif. Arg-183 and Lys-184 together coordinate substrate. Phosphoserine is present on Ser-198. The chain crosses the membrane as a helical span at residues Tyr-213 to Phe-232. Topologically, residues Trp-233–Ala-236 are lumenal. Residues Phe-237 to Leu-258 traverse the membrane as a helical segment. Trp-257 provides a ligand contact to substrate. At Val-259–Gly-354 the chain is on the cytoplasmic side. Fe cation-binding residues include His-264, His-293, His-296, and His-297. Positions His-293–His-297 match the Histidine box-3 motif.

Belongs to the fatty acid desaturase type 1 family. Fe(2+) is required as a cofactor.

It is found in the endoplasmic reticulum membrane. The enzyme catalyses octadecanoyl-CoA + 2 Fe(II)-[cytochrome b5] + O2 + 2 H(+) = (9Z)-octadecenoyl-CoA + 2 Fe(III)-[cytochrome b5] + 2 H2O. It catalyses the reaction hexadecanoyl-CoA + 2 Fe(II)-[cytochrome b5] + O2 + 2 H(+) = (9Z)-hexadecenoyl-CoA + 2 Fe(III)-[cytochrome b5] + 2 H2O. Stearoyl-CoA desaturase that utilizes O(2) and electrons from reduced cytochrome b5 to introduce the first double bond into saturated fatty acyl-CoA substrates. Catalyzes the insertion of a cis double bond at the delta-9 position into fatty acyl-CoA substrates including palmitoyl-CoA and stearoyl-CoA. Gives rise to a mixture of 16:1 and 18:1 unsaturated fatty acids. Plays an important role in lipid biosynthesis. Plays an important role in regulating the expression of genes that are involved in lipogenesis and in regulating mitochondrial fatty acid oxidation. Plays an important role in body energy homeostasis. Contributes to the biosynthesis of membrane phospholipids, cholesterol esters and triglycerides. The sequence is that of Stearoyl-CoA desaturase (SCD) from Mesocricetus auratus (Golden hamster).